The following is a 96-amino-acid chain: Pore-forming peptide amoebapore B (96 aa).

Positions 1–19 are cleaved as a signal peptide; the sequence is MRAIIFVLIFAIAFAATRE. A Saposin B-type domain is found at 20 to 96; the sequence is GAILCNLCKD…VVVCEKIHAC (77 aa). Disulfide bonds link Cys-24–Cys-96, Cys-27–Cys-90, and Cys-54–Cys-65.

In terms of assembly, monomer. Homodimer. Hexamer; formed during insertion in the membrane.

Its subcellular location is the cytoplasmic granule. Its function is as follows. Forms pores in the cell membrane of host cells. Has antibacterial activity against M.luteus, no activity against E.coli. Implicated in the cytolytic activity of the parasite. This is Pore-forming peptide amoebapore B from Entamoeba histolytica (strain ATCC 30459 / HM-1:IMSS / ABRM).